A 625-amino-acid polypeptide reads, in one-letter code: Mesothelin (625 aa).

An N-terminal signal peptide occupies residues Met-1–Leu-35. A glycan (N-linked (GlcNAc...) asparagine) is linked at Asn-93. Phosphoserine is present on Ser-202. Cys-304 and Cys-328 are joined by a disulfide. Asn-390, Asn-488, and Asn-517 each carry an N-linked (GlcNAc...) asparagine glycan. Ser-600 is lipidated: GPI-anchor amidated serine. The propeptide at Ser-601–Ser-625 is removed in mature form.

Belongs to the mesothelin family. Interacts with MUC16. In terms of processing, proteolytically cleaved by a furin-like convertase to generate megakaryocyte-potentiating factor (MPF), and the cleaved form of mesothelin. As to expression, highly expressed in lung and heart. Expressed at low levels in spleen, liver, kidney and testis. Present in lung (at protein level).

The protein localises to the cell membrane. It is found in the golgi apparatus. Its subcellular location is the secreted. In terms of biological role, membrane-anchored forms may play a role in cellular adhesion. Functionally, megakaryocyte-potentiating factor (MPF) may potentiate megakaryocyte colony formation. The polypeptide is Mesothelin (Msln) (Mus musculus (Mouse)).